The sequence spans 397 residues: MASLAVSINQFALEFSKKLAESAEGRNIFFSPWGISTALAMLYLGTKGTTADQMAQVLQFSSVEDFKSCPDSEKKRKMEFNSGKFEEIQSDFQTLAAEILKPGNSYVLKTANRIYGEKTYPFHNKYLEDMKTYFGAEPQSVNFVEASGQIRKEINSWVGSQTGGKIPNLLPDDSVDTKTKMVLVNALYFKGTWEHQFSVKNTTERPFRVNKTTSKPVQMMSMKQSLQVFHIEELQTIGLQLHYQNRDLSLLLLLPEAIDGLEQLERAITYEKLDKWTSADMMDTYEVQLYLPKFKMEESYDLKSALRGMGMTDVFSQSKADFSNMTSERNLFLSNVFHKTFLEINEEGTEAAAGTGSEISVRIKAPSIELNVDHPFLFFIRHNKTKSILFCGRFCSP.

Positions 74-77 (KKRK) match the Nuclear localization signal motif.

It belongs to the serpin family. Ov-serpin subfamily.

It localises to the nucleus. The protein resides in the cytoplasm. Protease inhibitor that may play a role in the regulation of protease activities during hematopoiesis and apoptosis induced by TNF. May regulate protease activities in the cytoplasm and in the nucleus. This is Serpin B10 (Serpinb10) from Mus musculus (Mouse).